We begin with the raw amino-acid sequence, 577 residues long: Phosphoethanolamine transferase EptC (577 aa).

Helical transmembrane passes span 17-37 (LGWALLYFWFFSTLLQAIIYI), 44-64 (NGIRDSLLFSSLWLIPVFLFP), 69-89 (IIAAVIGVVLWAASLAALCYY), 119-139 (YFSLKIVLIALAYTAVAVLLW), and 154-174 (VVSFALLYGLILHPIAMNTFI).

Belongs to the phosphoethanolamine transferase family. EptC/CptA subfamily. Forms a complex with an unidentified protein of approximately 36 kDa.

The protein localises to the cell inner membrane. It functions in the pathway bacterial outer membrane biogenesis; LPS core biosynthesis. Functionally, catalyzes the addition of a phosphoethanolamine moiety to the outer membrane lipopolysaccharide core. This is Phosphoethanolamine transferase EptC (eptC) from Escherichia coli (strain K12).